The sequence spans 757 residues: Endoribonuclease ysh1 (757 aa).

Zn(2+) is bound by residues H78, H80, D82, H83, H165, and D186. H403 (proton donor) is an active-site residue. H425 contributes to the Zn(2+) binding site. The interval 698–757 (SQNDVSEDDFENEESDDDKIFEQQTKIEDDVKNENKTEPVEEQKSEEKNEQPNLKKEELS) is disordered. Acidic residues predominate over residues 702 to 714 (VSEDDFENEESDD). Over residues 715–757 (DKIFEQQTKIEDDVKNENKTEPVEEQKSEEKNEQPNLKKEELS) the composition is skewed to basic and acidic residues.

The protein belongs to the metallo-beta-lactamase superfamily. RNA-metabolizing metallo-beta-lactamase-like family. CPSF2/YSH1 subfamily.

Its subcellular location is the cytoplasm. It is found in the nucleus. In terms of biological role, component of the cleavage factor I (CF I) involved in pre-mRNA 3'-end processing. The sequence is that of Endoribonuclease ysh1 (ysh1) from Schizosaccharomyces pombe (strain 972 / ATCC 24843) (Fission yeast).